The sequence spans 429 residues: Enolase (429 aa).

Residue Gln162 participates in (2R)-2-phosphoglycerate binding. Catalysis depends on Glu204, which acts as the Proton donor. Mg(2+) contacts are provided by Asp241, Glu283, and Asp310. Residues Lys335, Arg364, Ser365, and Lys386 each contribute to the (2R)-2-phosphoglycerate site. Catalysis depends on Lys335, which acts as the Proton acceptor.

The protein belongs to the enolase family. Mg(2+) serves as cofactor.

It is found in the cytoplasm. Its subcellular location is the secreted. The protein resides in the cell surface. The enzyme catalyses (2R)-2-phosphoglycerate = phosphoenolpyruvate + H2O. The protein operates within carbohydrate degradation; glycolysis; pyruvate from D-glyceraldehyde 3-phosphate: step 4/5. Functionally, catalyzes the reversible conversion of 2-phosphoglycerate (2-PG) into phosphoenolpyruvate (PEP). It is essential for the degradation of carbohydrates via glycolysis. The chain is Enolase from Mycobacterium avium (strain 104).